The sequence spans 391 residues: Putative ABC transporter glucose-binding protein TsgA13 (391 aa).

The signal sequence occupies residues 1–28 (MLDEESSIQRRDVLSALGAAGVTTLAGC). The tract at residues 24–71 (TLAGCTGGDTGDTDDTEASETTASEGTTSGTTTGDVETTDGGGPSEGE) is disordered. Over residues 42 to 59 (SETTASEGTTSGTTTGDV) the composition is skewed to low complexity.

This sequence belongs to the BMP lipoprotein family. The complex is composed of two ATP-binding proteins (TsgD13), two transmembrane proteins (TsgB13 and TsgC13) and a solute-binding protein (TsgA13).

Part of an ABC transporter complex involved in glucose import. This is Putative ABC transporter glucose-binding protein TsgA13 (tsgA13) from Haloferax volcanii (strain ATCC 29605 / DSM 3757 / JCM 8879 / NBRC 14742 / NCIMB 2012 / VKM B-1768 / DS2) (Halobacterium volcanii).